The primary structure comprises 396 residues: S-adenosylmethionine synthase 2 (396 aa).

Glu13 is a Mg(2+) binding site. His19 is an ATP binding site. Glu47 serves as a coordination point for K(+). L-methionine contacts are provided by Glu60 and Gln103. Residues 171 to 173 (DGK), 239 to 242 (SGRF), Asp250, 256 to 257 (RK), Ala273, Lys277, and Lys281 contribute to the ATP site. Position 250 (Asp250) interacts with L-methionine. Lys281 contacts L-methionine.

The protein belongs to the AdoMet synthase family. As to quaternary structure, homotetramer. Mn(2+) serves as cofactor. Mg(2+) is required as a cofactor. The cofactor is Co(2+). Requires K(+) as cofactor. Expressed in roots, stems and leaves (at protein level).

The protein localises to the cytoplasm. The catalysed reaction is L-methionine + ATP + H2O = S-adenosyl-L-methionine + phosphate + diphosphate. The protein operates within amino-acid biosynthesis; S-adenosyl-L-methionine biosynthesis; S-adenosyl-L-methionine from L-methionine: step 1/1. Its function is as follows. Catalyzes the formation of S-adenosylmethionine from methionine and ATP. The reaction comprises two steps that are both catalyzed by the same enzyme: formation of S-adenosylmethionine (AdoMet) and triphosphate, and subsequent hydrolysis of the triphosphate. May be involved in the synthesis of betain in response to abiotic stress such as high salinity. The sequence is that of S-adenosylmethionine synthase 2 (SAMS2) from Atriplex nummularia (Old man saltbush).